Reading from the N-terminus, the 110-residue chain is MRKFFVILMVALVVVLTASAVFAADSDPAKLNYYGYATAGALIGLGAAAGGGGAGMGQGLRGILEGSARNPGVTGKLMTLFIVGLALIESLVIYVLVFVLITFYANPFVK.

The next 3 membrane-spanning stretches (helical) occupy residues 4-24 (FFVI…VFAA), 37-57 (ATAG…AGMG), and 81-101 (FIVG…FVLI).

Belongs to the ATPase C chain family. In terms of assembly, F-type ATPases have 2 components, F(1) - the catalytic core - and F(0) - the membrane proton channel. F(1) has five subunits: alpha(3), beta(3), gamma(1), delta(1), epsilon(1). F(0) has three main subunits: a(1), b(2) and c(10-14). The alpha and beta chains form an alternating ring which encloses part of the gamma chain. F(1) is attached to F(0) by a central stalk formed by the gamma and epsilon chains, while a peripheral stalk is formed by the delta and b chains.

It is found in the cell inner membrane. Functionally, f(1)F(0) ATP synthase produces ATP from ADP in the presence of a proton or sodium gradient. F-type ATPases consist of two structural domains, F(1) containing the extramembraneous catalytic core and F(0) containing the membrane proton channel, linked together by a central stalk and a peripheral stalk. During catalysis, ATP synthesis in the catalytic domain of F(1) is coupled via a rotary mechanism of the central stalk subunits to proton translocation. Key component of the F(0) channel; it plays a direct role in translocation across the membrane. A homomeric c-ring of between 10-14 subunits forms the central stalk rotor element with the F(1) delta and epsilon subunits. The chain is ATP synthase subunit c from Thermodesulfovibrio yellowstonii (strain ATCC 51303 / DSM 11347 / YP87).